A 425-amino-acid polypeptide reads, in one-letter code: Serine--tRNA ligase (425 aa).

Residue 228 to 230 (TAE) participates in L-serine binding. ATP is bound at residue 259–261 (RSE). L-serine is bound at residue glutamate 282. 346–349 (EIAS) contacts ATP. Serine 382 serves as a coordination point for L-serine.

It belongs to the class-II aminoacyl-tRNA synthetase family. Type-1 seryl-tRNA synthetase subfamily. In terms of assembly, homodimer. The tRNA molecule binds across the dimer.

Its subcellular location is the cytoplasm. The catalysed reaction is tRNA(Ser) + L-serine + ATP = L-seryl-tRNA(Ser) + AMP + diphosphate + H(+). The enzyme catalyses tRNA(Sec) + L-serine + ATP = L-seryl-tRNA(Sec) + AMP + diphosphate + H(+). The protein operates within aminoacyl-tRNA biosynthesis; selenocysteinyl-tRNA(Sec) biosynthesis; L-seryl-tRNA(Sec) from L-serine and tRNA(Sec): step 1/1. Its function is as follows. Catalyzes the attachment of serine to tRNA(Ser). Is also able to aminoacylate tRNA(Sec) with serine, to form the misacylated tRNA L-seryl-tRNA(Sec), which will be further converted into selenocysteinyl-tRNA(Sec). This is Serine--tRNA ligase from Rickettsia felis (strain ATCC VR-1525 / URRWXCal2) (Rickettsia azadi).